The primary structure comprises 524 residues: DNA damage-binding protein CMR1 (524 aa).

The disordered stretch occupies residues 35–79 (EKIIPKPAPPKPKRASAPRAKREPVKRETARPTRQSSRLAGLDAD). Residues 54 to 65 (AKREPVKRETAR) show a composition bias toward basic and acidic residues. WD repeat units follow at residues 184–225 (LVPQ…VKAE), 245–285 (THSR…STEA), 295–332 (LPIS…STAE), 336–376 (LTDQ…GKGD), 385–425 (THDS…KWTA), 447–490 (GRWV…LAQL), and 493–524 (DGIT…CLWM).

It belongs to the WD repeat DDB2/WDR76 family.

In terms of biological role, DNA-binding protein that binds to both single- and double-stranded DNA. Binds preferentially to UV-damaged DNA. May be involved in DNA-metabolic processes. The polypeptide is DNA damage-binding protein CMR1 (Chaetomium globosum (strain ATCC 6205 / CBS 148.51 / DSM 1962 / NBRC 6347 / NRRL 1970) (Soil fungus)).